Reading from the N-terminus, the 502-residue chain is Lysine--tRNA ligase (502 aa).

Residues Glu-403 and Glu-410 each coordinate Mg(2+).

It belongs to the class-II aminoacyl-tRNA synthetase family. As to quaternary structure, homodimer. Mg(2+) is required as a cofactor.

Its subcellular location is the cytoplasm. The catalysed reaction is tRNA(Lys) + L-lysine + ATP = L-lysyl-tRNA(Lys) + AMP + diphosphate. In Synechococcus sp. (strain CC9605), this protein is Lysine--tRNA ligase.